Reading from the N-terminus, the 69-residue chain is Small, acid-soluble spore protein C1 (69 aa).

This sequence belongs to the alpha/beta-type SASP family.

In terms of biological role, SASP are bound to spore DNA. They are double-stranded DNA-binding proteins that cause DNA to change to an a-like conformation. They protect the DNA backbone from chemical and enzymatic cleavage and are thus involved in dormant spore's high resistance to UV light. In Priestia megaterium (Bacillus megaterium), this protein is Small, acid-soluble spore protein C1 (SASP-C1).